Reading from the N-terminus, the 86-residue chain is Cyclin-dependent kinase inhibitor 6 (86 aa).

Residues 1 to 15 (MAAAAATVTAVQPAA) are compositionally biased toward low complexity. The tract at residues 1 to 23 (MAAAAATVTAVQPAASSCGKRDG) is disordered.

This sequence belongs to the CDI family. ICK/KRP subfamily.

This Oryza sativa subsp. japonica (Rice) protein is Cyclin-dependent kinase inhibitor 6 (KRP6).